The sequence spans 365 residues: tRNA-specific 2-thiouridylase MnmA (365 aa).

ATP is bound by residues 14 to 21 (AMSGGVDS) and Leu40. Cys108 serves as the catalytic Nucleophile. A disulfide bridge links Cys108 with Cys204. Gly132 is an ATP binding site. Residues 154 to 156 (KDQ) are interaction with tRNA. The active-site Cysteine persulfide intermediate is Cys204.

Belongs to the MnmA/TRMU family.

Its subcellular location is the cytoplasm. It catalyses the reaction S-sulfanyl-L-cysteinyl-[protein] + uridine(34) in tRNA + AH2 + ATP = 2-thiouridine(34) in tRNA + L-cysteinyl-[protein] + A + AMP + diphosphate + H(+). Its function is as follows. Catalyzes the 2-thiolation of uridine at the wobble position (U34) of tRNA, leading to the formation of s(2)U34. The polypeptide is tRNA-specific 2-thiouridylase MnmA (Rickettsia africae (strain ESF-5)).